A 459-amino-acid chain; its full sequence is Cysteine--tRNA ligase (459 aa).

Cys-31 lines the Zn(2+) pocket. Residues 33 to 43 (PTVYDNPHIGN) carry the 'HIGH' region motif. Positions 216, 241, and 245 each coordinate Zn(2+). The 'KMSKS' region signature appears at 274-278 (KMSKS). Residue Lys-277 participates in ATP binding.

It belongs to the class-I aminoacyl-tRNA synthetase family. Monomer. Zn(2+) is required as a cofactor.

The protein resides in the cytoplasm. The enzyme catalyses tRNA(Cys) + L-cysteine + ATP = L-cysteinyl-tRNA(Cys) + AMP + diphosphate. This Rickettsia canadensis (strain McKiel) protein is Cysteine--tRNA ligase.